Here is a 130-residue protein sequence, read N- to C-terminus: Protein ApaG (130 aa).

Residues 3–127 (RALTRDIEVV…FSLDSPGLLR (125 aa)) enclose the ApaG domain. A disordered region spans residues 63–83 (EVTGPGVVGEQPRLSPGDTYE).

The chain is Protein ApaG from Rhizobium etli (strain ATCC 51251 / DSM 11541 / JCM 21823 / NBRC 15573 / CFN 42).